A 250-amino-acid polypeptide reads, in one-letter code: Hydroxyacylglutathione hydrolase (250 aa).

The Zn(2+) site is built by His-53, His-55, Asp-57, His-58, His-110, Asp-127, and His-165.

Belongs to the metallo-beta-lactamase superfamily. Glyoxalase II family. Monomer. It depends on Zn(2+) as a cofactor.

It carries out the reaction an S-(2-hydroxyacyl)glutathione + H2O = a 2-hydroxy carboxylate + glutathione + H(+). It functions in the pathway secondary metabolite metabolism; methylglyoxal degradation; (R)-lactate from methylglyoxal: step 2/2. Its function is as follows. Thiolesterase that catalyzes the hydrolysis of S-D-lactoyl-glutathione to form glutathione and D-lactic acid. The chain is Hydroxyacylglutathione hydrolase from Buchnera aphidicola subsp. Schizaphis graminum (strain Sg).